Reading from the N-terminus, the 362-residue chain is tRNA-specific 2-thiouridylase MnmA (362 aa).

ATP contacts are provided by residues 6–13 (AMSGGVDS) and Leu32. The active-site Nucleophile is Cys101. Cys101 and Cys197 are disulfide-bonded. Gly125 contributes to the ATP binding site. An interaction with tRNA region spans residues 147–149 (KDQ). Residue Cys197 is the Cysteine persulfide intermediate of the active site.

Belongs to the MnmA/TRMU family.

It localises to the cytoplasm. The enzyme catalyses S-sulfanyl-L-cysteinyl-[protein] + uridine(34) in tRNA + AH2 + ATP = 2-thiouridine(34) in tRNA + L-cysteinyl-[protein] + A + AMP + diphosphate + H(+). Functionally, catalyzes the 2-thiolation of uridine at the wobble position (U34) of tRNA, leading to the formation of s(2)U34. This is tRNA-specific 2-thiouridylase MnmA from Saccharopolyspora erythraea (strain ATCC 11635 / DSM 40517 / JCM 4748 / NBRC 13426 / NCIMB 8594 / NRRL 2338).